The primary structure comprises 121 residues: Large ribosomal subunit protein bL20 (121 aa).

Belongs to the bacterial ribosomal protein bL20 family.

In terms of biological role, binds directly to 23S ribosomal RNA and is necessary for the in vitro assembly process of the 50S ribosomal subunit. It is not involved in the protein synthesizing functions of that subunit. This chain is Large ribosomal subunit protein bL20, found in Mycoplasma mycoides subsp. mycoides SC (strain CCUG 32753 / NCTC 10114 / PG1).